A 427-amino-acid chain; its full sequence is 3-deoxy-D-manno-octulosonic acid transferase (427 aa).

Residues 4-24 (FFYTSLLLICQPLILCFIGLL) traverse the membrane as a helical; Signal-anchor segment. Catalysis depends on Glu-62, which acts as the Proton acceptor. Residues 270–271 (PR), 311–313 (MGE), and 337–340 (NPLE) contribute to the CMP site.

This sequence belongs to the glycosyltransferase group 1 family. Glycosyltransferase 30 subfamily.

The protein localises to the cell inner membrane. The enzyme catalyses lipid IVA (E. coli) + CMP-3-deoxy-beta-D-manno-octulosonate = alpha-Kdo-(2-&gt;6)-lipid IVA (E. coli) + CMP + H(+). It participates in bacterial outer membrane biogenesis; LPS core biosynthesis. In terms of biological role, involved in lipopolysaccharide (LPS) biosynthesis. Catalyzes the transfer of a single 3-deoxy-D-manno-octulosonate (Kdo) residue from CMP-Kdo to lipid IV(A), the tetraacyldisaccharide-1,4'-bisphosphate precursor of lipid A. Is strictly monofunctional, i.e. is capable of adding only a single Kdo residue to the acceptor lipid. The polypeptide is 3-deoxy-D-manno-octulosonic acid transferase (waaA) (Haemophilus influenzae (strain ATCC 51907 / DSM 11121 / KW20 / Rd)).